A 241-amino-acid chain; its full sequence is Tetraspanin-1 (241 aa).

3 consecutive transmembrane segments (helical) span residues 12-32 (ILFN…GIWV), 53-73 (FVNV…LGFL), and 89-109 (FFSI…VALV). Asn-154 carries an N-linked (GlcNAc...) asparagine glycan. The chain crosses the membrane as a helical span at residues 212–232 (AVTVGGVAVGVAALELAAMVV).

It belongs to the tetraspanin (TM4SF) family. Interacts with SLC19A2. Interacts with NTRK1/TRKA.

The protein localises to the cell membrane. The protein resides in the lysosome membrane. Functionally, structural component of specialized membrane microdomains known as tetraspanin-enriched microdomains (TERMs), which act as platforms for receptor clustering and signaling. Participates thereby in diverse biological functions such as cell signal transduction, adhesion, migration and protein trafficking. Regulates neuronal differentiation in response to NGF by facilitating NGF-mediated activation of NTRK1/TRKA receptor tyrosine kinase and subsequent downstream signaling pathways. Plays a role in the inhibition of TNFalpha-induced apoptosis. Mechanistically, inhibits the NF-kappa-B signaling pathway by blocking phosphorylation of CHUK. Also promotes the stability of the thiamine transporter 1/SLC19A2 in intestinal epithelial cells leading to an increase of thiamine uptake process. The chain is Tetraspanin-1 (Tspan1) from Rattus norvegicus (Rat).